The primary structure comprises 239 residues: Leucine rich adaptor protein 1 (239 aa).

2 LRR repeats span residues 55–83 and 93–114; these read LGDK…LVTL and LLEE…QYSL. The segment covering 105 to 116 has biased composition (low complexity); sequence SSLTSSQYSLTG. The segment at 105–138 is disordered; that stretch reads SSLTSSQYSLTGGSPGRSRRGSWDSLPDTSSTDR. Residues serine 118, serine 126, and serine 129 each carry the phosphoserine modification.

In terms of assembly, forms a tripartite complex with CDC42BPA/CDC42BPB and MYO18A acting as an adapter connecting both. Its binding to CDC42BPA/CDC42BPB results in their activation by abolition of their negative autoregulation. Interacts with CDC42BPA and CDC42BPB. In terms of processing, phosphorylated.

It is found in the cytoplasm. Functionally, acts as an activator of the canonical NF-kappa-B pathway and drive the production of pro-inflammatory cytokines. Promotes the antigen (Ag)-presenting and priming function of dendritic cells via the canonical NF-kappa-B pathway. In concert with MYO18A and CDC42BPA/CDC42BPB, is involved in modulating lamellar actomyosin retrograde flow that is crucial to cell protrusion and migration. Activates CDC42BPA/CDC42BPB and targets it to actomyosin through its interaction with MYO18A, leading to MYL9/MLC2 phosphorylation and MYH9/MYH10-dependent actomyosin assembly in the lamella. This is Leucine rich adaptor protein 1 (Lurap1) from Mus musculus (Mouse).